Here is a 223-residue protein sequence, read N- to C-terminus: Cytidylate kinase (223 aa).

G10–T18 serves as a coordination point for ATP.

The protein belongs to the cytidylate kinase family. Type 1 subfamily.

Its subcellular location is the cytoplasm. It catalyses the reaction CMP + ATP = CDP + ADP. The catalysed reaction is dCMP + ATP = dCDP + ADP. This Streptococcus pneumoniae (strain 70585) protein is Cytidylate kinase.